Here is a 196-residue protein sequence, read N- to C-terminus: Mpv17-like protein (196 aa).

Topologically, residues 1 to 16 (MVSWWQALTRAAGRYP) are cytoplasmic. Positions 16–55 (PWPANVLLYAGFFSGGDALQQVLRGGPADWQHTRHVATVA) are targeting to peroxisomes. A helical membrane pass occupies residues 17–34 (WPANVLLYAGFFSGGDAL). The Lumenal portion of the chain corresponds to 35-50 (QQVLRGGPADWQHTRH). The chain crosses the membrane as a helical span at residues 51-67 (VATVAVAFHANLNYVWL). Topologically, residues 68–90 (NLLERALPGRAPRTILAKVLCDQ) are cytoplasmic. The chain crosses the membrane as a helical span at residues 91 to 108 (ALGGPVYVSTFYAGMSIL). Residues 109-150 (QGKDDIFLDMRQKFWNTYKSGLMYWPFVQLINFSLIPIRWRT) are Lumenal-facing. The chain crosses the membrane as a helical span at residues 151–167 (AYTGLCGFLWATFLCFS). Topologically, residues 168-196 (QQEGDGTFKSAFTFRRIKVTNEVEKPSEK) are cytoplasmic.

Belongs to the peroxisomal membrane protein PXMP2/4 family.

It is found in the peroxisome membrane. In terms of biological role, participates in reactive oxygen species metabolism by up- or down-regulation of the genes of antioxidant enzymes. Protective against the mitochondrial apoptotic cascade. The polypeptide is Mpv17-like protein (MPV17L) (Bos taurus (Bovine)).